Consider the following 344-residue polypeptide: Geranylgeranyl transferase type-2 subunit alpha (344 aa).

6 PFTA repeats span residues 44–78 (YSEG…NDVF), 89–123 (LLDN…NAPY), 125–159 (NWNY…QIER), 165–199 (LAKK…TILN), 214–248 (ILEQ…HCNP), and 266–293 (YLQK…SLVN).

It belongs to the protein prenyltransferase subunit alpha family. As to quaternary structure, heterodimer of an alpha and a beta subunit.

It carries out the reaction geranylgeranyl diphosphate + L-cysteinyl-[protein] = S-geranylgeranyl-L-cysteinyl-[protein] + diphosphate. In terms of biological role, catalyzes the transfer of a geranyl-geranyl moiety from geranyl-geranyl pyrophosphate to proteins having the C-terminal-XCC or -XCXC, where both cysteines may become modified. The protein is Geranylgeranyl transferase type-2 subunit alpha (bet4) of Schizosaccharomyces pombe (strain 972 / ATCC 24843) (Fission yeast).